The chain runs to 134 residues: Protein NrdI (134 aa).

Belongs to the NrdI family.

Its function is as follows. Probably involved in ribonucleotide reductase function. The sequence is that of Protein NrdI from Yersinia enterocolitica serotype O:8 / biotype 1B (strain NCTC 13174 / 8081).